The sequence spans 204 residues: Lymphotoxin-alpha (204 aa).

A signal peptide spans 1–33; that stretch reads MTPPGRLYLLRVCSTPPLLLLGLLLALPLEAQG. Residues 62-204 form the THD domain; that stretch reads PAAHLVGDPS…SSVFFGAFAL (143 aa). N-linked (GlcNAc...) asparagine glycosylation is present at Asn-95. Cys-119 and Cys-155 are joined by a disulfide.

The protein belongs to the tumor necrosis factor family. In terms of assembly, homotrimer, and heterotrimer of either two LTB and one LTA subunits or (less prevalent) two LTA and one LTB subunits. Interacts with TNFRSF14.

It localises to the secreted. It is found in the membrane. Functionally, cytokine that in its homotrimeric form binds to TNFRSF1A/TNFR1, TNFRSF1B/TNFBR and TNFRSF14/HVEM. In its heterotrimeric form with LTB binds to TNFRSF3/LTBR. Lymphotoxin is produced by lymphocytes and is cytotoxic for a wide range of tumor cells in vitro and in vivo. In Bos taurus (Bovine), this protein is Lymphotoxin-alpha (LTA).